Reading from the N-terminus, the 599-residue chain is Elongation factor 4 (599 aa).

One can recognise a tr-type G domain in the interval 2-184; it reads KHIRNFSIIA…RLVRDIPPPE (183 aa). GTP is bound by residues 14–19 and 131–134; these read DHGKST and NKID.

Belongs to the TRAFAC class translation factor GTPase superfamily. Classic translation factor GTPase family. LepA subfamily.

The protein localises to the cell inner membrane. It carries out the reaction GTP + H2O = GDP + phosphate + H(+). Functionally, required for accurate and efficient protein synthesis under certain stress conditions. May act as a fidelity factor of the translation reaction, by catalyzing a one-codon backward translocation of tRNAs on improperly translocated ribosomes. Back-translocation proceeds from a post-translocation (POST) complex to a pre-translocation (PRE) complex, thus giving elongation factor G a second chance to translocate the tRNAs correctly. Binds to ribosomes in a GTP-dependent manner. The protein is Elongation factor 4 of Pectobacterium carotovorum subsp. carotovorum (strain PC1).